The following is a 1531-amino-acid chain: La-related protein Larp4B (1531 aa).

Over residues 112–147 (HTHVAHQQQQQQQQQTIQQHLHQQQQQQSPHPAQHL) the composition is skewed to low complexity. Disordered regions lie at residues 112–148 (HTHV…QHLT) and 239–263 (QLPA…EPNI). Positions 262–351 (NIPLDKLKQM…RPNRKRCIII (90 aa)) constitute an HTH La-type RNA-binding domain. The region spanning 348–423 (CIIILREISN…KPIMARIKPK (76 aa)) is the RRM domain. Disordered stretches follow at residues 533-605 (PLPP…QGGN), 710-736 (AHSH…ASSS), 748-768 (TAPA…QQTQ), 791-1135 (QEAG…SNQQ), 1160-1211 (DVVR…TPAL), and 1251-1285 (ASSK…QPSQ). A compositionally biased stretch (low complexity) spans 565 to 578 (YNNNHRGNPNNVGG). Low complexity-rich tracts occupy residues 754 to 768 (QPGQ…QQTQ) and 810 to 826 (SSNM…TSMS). Positions 860–884 (SSPSNPHPQQHLMSSSTGSNVQSAG) are enriched in polar residues. Residues 945–959 (ALSSQQQQHHLTTGT) are compositionally biased toward low complexity. The span at 966–975 (HHYHHHHHHN) shows a compositional bias: basic residues. Over residues 983-1004 (NSGGLGVSSGGSGGGGSGGGSG) the composition is skewed to gly residues. Residues 1031–1045 (HQQQQQQQQQQQQQQ) are compositionally biased toward low complexity. Residues 1068-1086 (TSATAPHTPQATGGASLHN) are compositionally biased toward polar residues. Over residues 1087–1115 (STTSSSSSTGLGQKQTLHQQQQQAPQQHQ) the composition is skewed to low complexity. Phosphoserine is present on Ser1123. A compositionally biased stretch (gly residues) spans 1164 to 1173 (TGGGGGGGGK). A compositionally biased stretch (polar residues) spans 1183–1200 (PQGQNQPHMAPNYQQHQP). Residues 1270-1280 (KSNKTEDEMHP) are compositionally biased toward basic and acidic residues. Residues Ser1370 and Ser1413 each carry the phosphoserine modification. 2 disordered regions span residues 1393–1418 (KAAA…TGSH) and 1450–1531 (GGAS…ANNS). Composition is skewed to polar residues over residues 1467-1477 (ATNTTQGSSAV) and 1502-1515 (QHYG…TNAN).

Its function is as follows. Probable RNA binding protein. Negatively regulates myc at the protein level, via an unknown mechanism, and may therefore have a role in growth. Has no effect on myc mRNA levels. The chain is La-related protein Larp4B from Drosophila melanogaster (Fruit fly).